Here is a 329-residue protein sequence, read N- to C-terminus: Beta-ketoacyl-[acyl-carrier-protein] synthase III (329 aa).

Active-site residues include Cys-113 and His-255. Residues 256-260 (QANQR) are ACP-binding. Asn-285 is an active-site residue.

Belongs to the thiolase-like superfamily. FabH family. Homodimer.

The protein localises to the cytoplasm. It carries out the reaction malonyl-[ACP] + acetyl-CoA + H(+) = 3-oxobutanoyl-[ACP] + CO2 + CoA. The protein operates within lipid metabolism; fatty acid biosynthesis. Its function is as follows. Catalyzes the condensation reaction of fatty acid synthesis by the addition to an acyl acceptor of two carbons from malonyl-ACP. Catalyzes the first condensation reaction which initiates fatty acid synthesis and may therefore play a role in governing the total rate of fatty acid production. Possesses both acetoacetyl-ACP synthase and acetyl transacylase activities. Its substrate specificity determines the biosynthesis of branched-chain and/or straight-chain of fatty acids. The polypeptide is Beta-ketoacyl-[acyl-carrier-protein] synthase III (Chlorobaculum tepidum (strain ATCC 49652 / DSM 12025 / NBRC 103806 / TLS) (Chlorobium tepidum)).